The following is a 292-amino-acid chain: Protease HtpX (292 aa).

A run of 2 helical transmembrane segments spans residues 5–25 and 35–55; these read VVLFLLTNFAVLILAGIVMSV and GLLVMAAIFGFGGSFISLLLS. Residue His-140 coordinates Zn(2+). The active site involves Glu-141. Position 144 (His-144) interacts with Zn(2+). Transmembrane regions (helical) follow at residues 155–175 and 193–213; these read LLQGVLNTFVIVLARVVGGII and IIVFVLEMVFGLFATMIAMWF. Residue Glu-218 coordinates Zn(2+).

This sequence belongs to the peptidase M48B family. Zn(2+) is required as a cofactor.

The protein resides in the cell inner membrane. The protein is Protease HtpX of Xanthomonas campestris pv. campestris (strain 8004).